A 799-amino-acid chain; its full sequence is Heat shock protein 90-6, mitochondrial (799 aa).

The transit peptide at 1–48 (MIRLSKRSVSTLLRSGNQSFRIAAAASTSRSSPSATDVKRSDTESRWY) directs the protein to the mitochondrion. Residues 23–35 (AAAASTSRSSPSA) are compositionally biased toward low complexity. The disordered stretch occupies residues 23-61 (AAAASTSRSSPSATDVKRSDTESRWYSSLTNGQSKNSGS). Residues 46–61 (RWYSSLTNGQSKNSGS) show a composition bias toward polar residues. ATP-binding positions include Glu-124, Asn-128, Asp-170, Met-175, 190 to 191 (SG), 214 to 219 (QFGVGF), and Thr-269. The segment at 314-337 (EVEVEDDPTETKKDDQDDQTEKKK) is disordered. Over residues 322–334 (TETKKDDQDDQTE) the composition is skewed to basic and acidic residues. Arg-464 is an ATP binding site. Over residues 766–777 (SPEVQPQQQQMA) the composition is skewed to polar residues. The segment at 766–799 (SPEVQPQQQQMAHSHDAETFEAEVVEPVEVDGKK) is disordered. Positions 784–799 (TFEAEVVEPVEVDGKK) are enriched in acidic residues.

The protein belongs to the heat shock protein 90 family. In terms of assembly, interacts with P23-1.

It is found in the mitochondrion. Its function is as follows. Molecular chaperone which stabilizes unfolding protein intermediates and functions as a folding molecular chaperone that assists the non-covalent folding of proteins in an ATP-dependent manner. This is Heat shock protein 90-6, mitochondrial from Arabidopsis thaliana (Mouse-ear cress).